Reading from the N-terminus, the 97-residue chain is Cell division protein FtsL (97 aa).

The Cytoplasmic segment spans residues 1–11 (MSRLFVKRLPT). The chain crosses the membrane as a helical span at residues 12–32 (GSFLMLLLYIGLLLSAIAVAY). Over 33–97 (STYWNRQLLN…DPAEVRMVAP (65 aa)) the chain is Periplasmic.

Belongs to the FtsL family. As to quaternary structure, part of a complex composed of FtsB, FtsL and FtsQ.

It is found in the cell inner membrane. In terms of biological role, essential cell division protein. May link together the upstream cell division proteins, which are predominantly cytoplasmic, with the downstream cell division proteins, which are predominantly periplasmic. In Pseudomonas aeruginosa (strain ATCC 15692 / DSM 22644 / CIP 104116 / JCM 14847 / LMG 12228 / 1C / PRS 101 / PAO1), this protein is Cell division protein FtsL.